The chain runs to 166 residues: Protein adg1 (166 aa).

An N-terminal signal peptide occupies residues 1-22 (MFLRSIFQTLCAVSFLAGSVFA).

It localises to the endoplasmic reticulum. This chain is Protein adg1 (adg1), found in Schizosaccharomyces pombe (strain 972 / ATCC 24843) (Fission yeast).